The primary structure comprises 228 residues: Translation initiation factor 6 (228 aa).

Functionally, binds to the 50S ribosomal subunit and prevents its association with the 30S ribosomal subunit to form the 70S initiation complex. The polypeptide is Translation initiation factor 6 (Methanocaldococcus jannaschii (strain ATCC 43067 / DSM 2661 / JAL-1 / JCM 10045 / NBRC 100440) (Methanococcus jannaschii)).